The primary structure comprises 532 residues: NADH-quinone oxidoreductase subunit N 2 (532 aa).

14 helical membrane-spanning segments follow: residues 37–57 (VAPPTLTALAALAVLVADLFL), 63–83 (RLLGYAALTALAAALALLIPL), 107–127 (FTLVIQALVLGGALLTVLLSL), 133–153 (LPAGEYWFLLLASAAGAALLP), 158–178 (LATLVVALEVASLPAFALVGI), 192–212 (FFLSSVVATAVMLLGVSFVYA), 241–261 (VALTLVGFAFKTAAAPFHFWV), 276–296 (LSVVGKAVGFSGLILVTVVAF), 302–322 (VWGPALAVLAALTMTAGNVAA), 336–356 (LLAWSSVAQAGYLLVPIAAAA), 367–387 (VAYALMYAVVNLGAFAVAAVV), 411–431 (LALGFFLLCLAGLPPGIIGLF), 444–464 (GLGWLAVVMAVNVVIALYYYL), and 504–524 (TAIVLTATAGILLSGVPQTVL).

The protein belongs to the complex I subunit 2 family. As to quaternary structure, NDH-1 is composed of 14 different subunits. Subunits NuoA, H, J, K, L, M, N constitute the membrane sector of the complex.

The protein localises to the cell membrane. The enzyme catalyses a quinone + NADH + 5 H(+)(in) = a quinol + NAD(+) + 4 H(+)(out). NDH-1 shuttles electrons from NADH, via FMN and iron-sulfur (Fe-S) centers, to quinones in the respiratory chain. The immediate electron acceptor for the enzyme in this species is believed to be a menaquinone. Couples the redox reaction to proton translocation (for every two electrons transferred, four hydrogen ions are translocated across the cytoplasmic membrane), and thus conserves the redox energy in a proton gradient. This is NADH-quinone oxidoreductase subunit N 2 from Streptomyces griseus subsp. griseus (strain JCM 4626 / CBS 651.72 / NBRC 13350 / KCC S-0626 / ISP 5235).